Reading from the N-terminus, the 617-residue chain is Cytoplasmic polyadenylation element-binding protein 1 (617 aa).

The disordered stretch occupies residues 1–38; the sequence is MQSQLKACGDAPAPSCSLHHRRTISKKPSNGGNSGGGG. RRM domains are found at residues 273–377 and 394–465; these read RKVF…AWRL and RTVF…HADT. 2 disordered regions span residues 534–568 and 592–617; these read DQTRILPRPPHHSTSHYHHRSTPSHHHNHTHQNVT and NQNNNSANSTPPQMKQFSAIPTAIGY. Positions 542–563 are enriched in basic residues; the sequence is PPHHSTSHYHHRSTPSHHHNHT.

Interacts with fbf-1.

Cytoplasmic polyadenylation element binding protein that binds to and regulates the translation of specific mRNAs. Essential for progression through meiosis. Involved in spermatogenesis. The chain is Cytoplasmic polyadenylation element-binding protein 1 (cpb-1) from Caenorhabditis japonica.